The chain runs to 574 residues: Putative dehydratase IlvD1 (574 aa).

The [4Fe-4S] cluster site is built by Cys124 and Cys197.

It belongs to the IlvD/Edd family. [4Fe-4S] cluster is required as a cofactor.

Its function is as follows. Involved in the degradation of galactose via the DeLey-Doudoroff pathway. In Rhizobium meliloti (strain 1021) (Ensifer meliloti), this protein is Putative dehydratase IlvD1 (ilvD1).